The chain runs to 111 residues: Beta-2-microglobulin (111 aa).

An N-terminal signal peptide occupies residues 1–17 (MRALILLSLGLLRVAVP). The region spanning 20 to 111 (PQVVVYTYKP…KTSIYKLESF (92 aa)) is the Ig-like C1-type domain.

It belongs to the beta-2-microglobulin family. In terms of assembly, heterodimer of an alpha chain and a beta chain. Beta-2-microglobulin is the beta-chain of major histocompatibility complex class I molecules.

The protein localises to the secreted. Its function is as follows. Component of the class I major histocompatibility complex (MHC). Involved in the presentation of peptide antigens to the immune system. The chain is Beta-2-microglobulin (b2m) from Rostroraja eglanteria (Clearnose skate).